Consider the following 191-residue polypeptide: GDP-mannose pyrophosphatase (191 aa).

GDP-alpha-D-mannose contacts are provided by residues Tyr17, 38–40 (KRE), Arg67, and 85–87 (AGL). In terms of domain architecture, Nudix hydrolase spans 43–180 (DRGNGATILL…EIRDGKTVLL (138 aa)). Ala85, Glu100, and Glu104 together coordinate Mg(2+). Positions 86-106 (GLLDNDEPEVCIRKEAIEETG) match the Nudix box motif. GDP-alpha-D-mannose is bound by residues Glu104, Glu127, 150 to 151 (DE), and Lys176. Glu151 is a binding site for Mg(2+).

Belongs to the Nudix hydrolase family. NudK subfamily. Homodimer. The cofactor is Mg(2+).

The catalysed reaction is GDP-alpha-D-mannose + H2O = alpha-D-mannose 1-phosphate + GMP + 2 H(+). In terms of biological role, nucleoside diphosphate sugar hydrolase that hydrolyzes GDP-mannose as its preferred substrate, yielding GMP and mannose-1-phosphate. In Escherichia coli (strain UTI89 / UPEC), this protein is GDP-mannose pyrophosphatase (nudK).